The following is a 568-amino-acid chain: Urease subunit alpha (568 aa).

The 439-residue stretch at 130–568 (GGIDTHIHFI…LPMAQRYFLF (439 aa)) folds into the Urease domain. Residues H135, H137, and K218 each coordinate Ni(2+). K218 bears the N6-carboxylysine mark. H220 is a binding site for substrate. Positions 247 and 273 each coordinate Ni(2+). H321 serves as the catalytic Proton donor. Residue D361 participates in Ni(2+) binding.

Belongs to the metallo-dependent hydrolases superfamily. Urease alpha subunit family. In terms of assembly, heterotrimer of UreA (gamma), UreB (beta) and UreC (alpha) subunits. Three heterotrimers associate to form the active enzyme. Ni cation is required as a cofactor. Carboxylation allows a single lysine to coordinate two nickel ions.

It is found in the cytoplasm. It carries out the reaction urea + 2 H2O + H(+) = hydrogencarbonate + 2 NH4(+). It functions in the pathway nitrogen metabolism; urea degradation; CO(2) and NH(3) from urea (urease route): step 1/1. The protein is Urease subunit alpha of Burkholderia cenocepacia (strain ATCC BAA-245 / DSM 16553 / LMG 16656 / NCTC 13227 / J2315 / CF5610) (Burkholderia cepacia (strain J2315)).